A 262-amino-acid polypeptide reads, in one-letter code: tRNA (guanine-N(7)-)-methyltransferase (262 aa).

The interval 1–58 is disordered; that stretch reads MLPQDTNTDPLPGDDAESASGKSADASQGTPNPGDEVAHPRRIRSFVRRAGRTSTGQQ. Basic residues predominate over residues 40–51; that stretch reads PRRIRSFVRRAG. Positions 92, 117, 144, and 167 each coordinate S-adenosyl-L-methionine. Residue Asp167 is part of the active site. Residue Lys171 coordinates substrate. Positions 173 to 178 are interaction with RNA; that stretch reads RHNKRR. Residues Asp203 and 241-244 each bind substrate; that span reads TKFE.

The protein belongs to the class I-like SAM-binding methyltransferase superfamily. TrmB family.

The catalysed reaction is guanosine(46) in tRNA + S-adenosyl-L-methionine = N(7)-methylguanosine(46) in tRNA + S-adenosyl-L-homocysteine. It functions in the pathway tRNA modification; N(7)-methylguanine-tRNA biosynthesis. Functionally, catalyzes the formation of N(7)-methylguanine at position 46 (m7G46) in tRNA. This is tRNA (guanine-N(7)-)-methyltransferase from Cupriavidus metallidurans (strain ATCC 43123 / DSM 2839 / NBRC 102507 / CH34) (Ralstonia metallidurans).